A 314-amino-acid polypeptide reads, in one-letter code: MMGQNQTSISDFLLLGLPIQPEQQNLCYALFLAMYLTTLLGNLLIIVLIRLDSHLHTPMYLFLSNLSFSDLCFSSVTIPKLLQNMQNQDPSIPYADCLTQMYFFLLFGDLESFLLVAMAYDRYVAICFPLHYTAIMSPMLCLSLVALSWVLTTFHAMLHTLLMARLCFCADNVIPHFFCDMSALLKLACSDTRVNEWVIFIMGGLIVVIPFLLILGSYARIVSSILKVPSSKGICKAFSTCGSHLSVVSLFYGTIIGLYLCPSANSSTLKETVMAMMYTVVTPMLNPFIYSLRNRDMKGALERVIXKRKNPFLL.

Over 1–25 (MMGQNQTSISDFLLLGLPIQPEQQN) the chain is Extracellular. A glycan (N-linked (GlcNAc...) asparagine) is linked at Asn5. The helical transmembrane segment at 26–49 (LCYALFLAMYLTTLLGNLLIIVLI) threads the bilayer. Residues 50-57 (RLDSHLHT) are Cytoplasmic-facing. Residues 58–79 (PMYLFLSNLSFSDLCFSSVTIP) traverse the membrane as a helical segment. The Extracellular segment spans residues 80 to 100 (KLLQNMQNQDPSIPYADCLTQ). The cysteines at positions 97 and 189 are disulfide-linked. Residues 101–120 (MYFFLLFGDLESFLLVAMAY) traverse the membrane as a helical segment. At 121-139 (DRYVAICFPLHYTAIMSPM) the chain is on the cytoplasmic side. Residues 140 to 158 (LCLSLVALSWVLTTFHAML) form a helical membrane-spanning segment. Over 159–196 (HTLLMARLCFCADNVIPHFFCDMSALLKLACSDTRVNE) the chain is Extracellular. The chain crosses the membrane as a helical span at residues 197-219 (WVIFIMGGLIVVIPFLLILGSYA). Over 220-236 (RIVSSILKVPSSKGICK) the chain is Cytoplasmic. The chain crosses the membrane as a helical span at residues 237-260 (AFSTCGSHLSVVSLFYGTIIGLYL). Topologically, residues 261 to 272 (CPSANSSTLKET) are extracellular. N-linked (GlcNAc...) asparagine glycosylation is present at Asn265. The helical transmembrane segment at 273-292 (VMAMMYTVVTPMLNPFIYSL) threads the bilayer. The Cytoplasmic portion of the chain corresponds to 293-314 (RNRDMKGALERVIXKRKNPFLL).

This sequence belongs to the G-protein coupled receptor 1 family.

The protein localises to the cell membrane. Its function is as follows. Odorant receptor. This chain is Olfactory receptor 1E5 (OR1E5), found in Pan troglodytes (Chimpanzee).